Here is a 320-residue protein sequence, read N- to C-terminus: Beta-carotene ketolase (320 aa).

It catalyses the reaction all-trans-beta-carotene + 2 AH2 + 2 O2 = echinenone + 2 A + 3 H2O. It carries out the reaction echinenone + 2 AH2 + 2 O2 = canthaxanthin + 2 A + 3 H2O. Its pathway is carotenoid biosynthesis; astaxanthin biosynthesis. Its function is as follows. Converts beta-carotene to canthaxanthin via echinenone. The protein is Beta-carotene ketolase of Haematococcus lacustris (Green alga).